Here is a 906-residue protein sequence, read N- to C-terminus: Cadherin-2A (906 aa).

The first 28 residues, 1–28 (MCRKEPFLLPTALCILAALVLHQGPVEA), serve as a signal peptide directing secretion. Positions 29 to 160 (LGGSRLCKTG…KHNGLQRQKR (132 aa)) are excised as a propeptide. Cadherin domains are found at residues 161–268 (DWVI…RPEF), 269–383 (LHQI…PPEF), 384–498 (TAMT…NPYF), 499–604 (TPNP…DNAP), and 605–714 (YVYP…TTAP). The Extracellular segment spans residues 161–724 (DWVIPPINVP…IIGTGLGTGA (564 aa)). Ca(2+)-binding residues include Glu-171, Asp-227, Glu-229, Asp-260, Met-261, Asn-262, Asp-263, and Asn-264. A glycan (N-linked (GlcNAc...) asparagine) is linked at Asn-274. The Ca(2+) site is built by Asp-294, Asp-296, and Asn-302. Asn-326 carries an N-linked (GlcNAc...) asparagine glycan. Position 354 (Asp-354) interacts with Ca(2+). Asn-403, Asn-573, Asn-623, Asn-652, and Asn-693 each carry an N-linked (GlcNAc...) asparagine glycan. The chain crosses the membrane as a helical span at residues 725-746 (IIAILLCIIILLTLVLMFVVWM). Over 747–906 (KRRDKERQAK…LADMYGGSDD (160 aa)) the chain is Cytoplasmic. Disordered regions lie at residues 775 to 800 (EEGG…EPDT) and 863 to 884 (SGST…EQDY). Positions 776-785 (EGGGEEDQDY) are enriched in acidic residues. The span at 863–880 (SGSTAGSLSSLNSSSSGG) shows a compositional bias: low complexity.

In terms of assembly, homodimer (via extracellular region). Can also form heterodimers with other cadherins (via extracellular region). Dimerization occurs in trans, i.e. with a cadherin chain from another cell.

The protein localises to the cell membrane. It localises to the sarcolemma. The protein resides in the cell junction. Its subcellular location is the cell surface. It is found in the desmosome. The protein localises to the adherens junction. Calcium-dependent cell adhesion protein; preferentially mediates homotypic cell-cell adhesion. Cadherins may thus contribute to the sorting of heterogeneous cell types, and thereby play an important role during embryonic development. Required for proper neurite branching. Required for pre- and postsynaptic organization. The polypeptide is Cadherin-2A (cdh2-a) (Xenopus laevis (African clawed frog)).